Reading from the N-terminus, the 527-residue chain is UPF0053 protein YegH (527 aa).

5 consecutive transmembrane segments (helical) span residues 14–34 (ITLI…IAIL), 51–71 (LLLA…LVTL), 81–101 (FTFS…LFKA), 145–165 (ITAV…VIAI), and 185–205 (IVIL…AEGF). 2 CBS domains span residues 306-366 (MTSR…GEPL) and 371-429 (LIRQ…PNEV).

Belongs to the UPF0053 family.

Its subcellular location is the cell membrane. The sequence is that of UPF0053 protein YegH (yegH) from Escherichia coli (strain K12).